We begin with the raw amino-acid sequence, 254 residues long: tRNA 2'-phosphotransferase 1 (254 aa).

The residue at position 1 (Met-1) is an N-acetylmethionine. 2 disordered regions span residues 1–30 (MNSF…DRDV) and 225–254 (RKPL…MTQQ). The span at 233–244 (NEEKEHQRDSKH) shows a compositional bias: basic and acidic residues.

It belongs to the KptA/TPT1 family.

It carries out the reaction 2'-phospho-[ligated tRNA] + NAD(+) = mature tRNA + ADP-alpha-D-ribose 1'',2''-cyclic phosphate + nicotinamide. In terms of biological role, catalyzes the last step of tRNA splicing, the transfer of the splice junction 2'-phosphate from ligated tRNA to NAD to produce ADP-ribose 1''-2'' cyclic phosphate. The protein is tRNA 2'-phosphotransferase 1 (TRPT1) of Bos taurus (Bovine).